A 476-amino-acid chain; its full sequence is Small ribosomal subunit protein mS29 (476 aa).

A mitochondrion-targeting transit peptide spans 1–54 (MLPKFRSRSSIIKNTERISNILSGGKLTVCGSKLGGLYTFEKCTFNKYYSSSQY). The disordered stretch occupies residues 58–97 (GRPVGGNIHSSSNQQRQKNSEAPRINEIPPSTSSVEKSTT). 2 stretches are compositionally biased toward polar residues: residues 65-74 (IHSSSNQQRQ) and 86-97 (PPSTSSVEKSTT). 200–207 (GAPGSGRS) is an ATP binding site.

This sequence belongs to the mitochondrion-specific ribosomal protein mS29 family. In terms of assembly, component of the mitochondrial small ribosomal subunit (mt-SSU). Mature yeast 74S mitochondrial ribosomes consist of a small (37S) and a large (54S) subunit. The 37S small subunit contains a 15S ribosomal RNA (15S mt-rRNA) and at least 32 different proteins. The 54S large subunit contains a 21S rRNA (21S mt-rRNA) and at least 45 different proteins.

Its subcellular location is the mitochondrion. Component of the mitochondrial ribosome (mitoribosome), a dedicated translation machinery responsible for the synthesis of mitochondrial genome-encoded proteins, including at least some of the essential transmembrane subunits of the mitochondrial respiratory chain. The mitoribosomes are attached to the mitochondrial inner membrane and translation products are cotranslationally integrated into the membrane. mS29 binds GTP and is probably an active GTPase. GTP hydrolysis may be linked to subunit association. mS29 also has an extraribosomal function, being required for maintenance of mitochondrial DNA. The protein is Small ribosomal subunit protein mS29 (rsm23) of Schizosaccharomyces pombe (strain 972 / ATCC 24843) (Fission yeast).